We begin with the raw amino-acid sequence, 134 residues long: MTNVFTIDAFREEVKKKYEPVTIGISEDVTVELKPLLKLGQKAREAVVEAVKEVEDIPDIDEDDEEAEELVDEYSLRICEIVAKVFRLIATKPKKLIAALDEEEDPRIRAELYATVLRTWMVETQLGEAAPSPS.

The protein belongs to the L5likevirus tail assembly protein family. Interacts with tail assembly protein Gp25 and tape measure protein.

Promotes tail assembly by creating a scaffold for the tail tube proteins. The tail assembly proteins Gp24 and Gp25 would wrap the linear tape measure protein to create a tail assembly scaffold. It would allow polymerization of tail tube protein during which Gp24 and Gp25 are released and therefore are absent from the mature virion. The tail assembly protein Gp25 is produced by a rare -1 ribosomal frameshift. The ratio Gp24/Gp25 is important for proper tail assembly. The protein is Tail assembly protein Gp24 (24) of Mycobacterium (Mycobacteriophage D29).